A 495-amino-acid polypeptide reads, in one-letter code: Glycerol kinase (495 aa).

Residue Thr11 coordinates ADP. ATP is bound by residues Thr11, Thr12, and Ser13. Position 11 (Thr11) interacts with sn-glycerol 3-phosphate. Residue Arg15 coordinates ADP. Sn-glycerol 3-phosphate is bound by residues Arg81, Glu82, Tyr133, and Asp242. 5 residues coordinate glycerol: Arg81, Glu82, Tyr133, Asp242, and Gln243. ADP-binding residues include Thr264 and Gly307. ATP contacts are provided by Thr264, Gly307, Gln311, and Gly409. Residues Gly409 and Asn413 each contribute to the ADP site.

Belongs to the FGGY kinase family.

The enzyme catalyses glycerol + ATP = sn-glycerol 3-phosphate + ADP + H(+). It functions in the pathway polyol metabolism; glycerol degradation via glycerol kinase pathway; sn-glycerol 3-phosphate from glycerol: step 1/1. Its activity is regulated as follows. Inhibited by fructose 1,6-bisphosphate (FBP). Key enzyme in the regulation of glycerol uptake and metabolism. Catalyzes the phosphorylation of glycerol to yield sn-glycerol 3-phosphate. The chain is Glycerol kinase from Borrelia hermsii (strain HS1 / DAH).